Here is a 537-residue protein sequence, read N- to C-terminus: Putative cysteine ligase BshC (537 aa).

A coiled-coil region spans residues 417 to 457 (ASEQFLNELDQLEAQQKETYERLAAEVQGNEDNKNLVEKNN).

This sequence belongs to the BshC family.

In terms of biological role, involved in bacillithiol (BSH) biosynthesis. May catalyze the last step of the pathway, the addition of cysteine to glucosamine malate (GlcN-Mal) to generate BSH. The sequence is that of Putative cysteine ligase BshC from Staphylococcus carnosus (strain TM300).